A 698-amino-acid polypeptide reads, in one-letter code: Sulfhydryl oxidase 2 (698 aa).

Positions 1-21 (MAAAGAAVARSPGIGAGPALR) are cleaved as a signal peptide. A Thioredoxin domain is found at 34–178 (PRLLVLLAAA…RQTMIDFLQN (145 aa)). Residue Asn-77 is glycosylated (N-linked (GlcNAc...) asparagine). Active-site nucleophile residues include Cys-91 and Cys-94. 2 disulfides stabilise this stretch: Cys-91/Cys-94 and Cys-122/Cys-131. Residues Asn-178, Asn-218, and Asn-266 are each glycosylated (N-linked (GlcNAc...) asparagine). A disulfide bridge links Cys-418 with Cys-430. The region spanning 421–530 (SRSELRGYPC…EDPRFPKLQW (110 aa)) is the ERV/ALR sulfhydryl oxidase domain. FAD contacts are provided by residues Arg-426, Trp-433, His-437, Glu-478, His-482, 505–512 (WKKHNMVN), Lys-527, and Trp-530. An intrachain disulfide couples Cys-476 to Cys-479. Cys-536 and Cys-539 are joined by a disulfide. The segment at 570 to 624 (TYSADQGDSSEGGTLARGEEEEKRLTPPEVSHGDRDTQSVRPPGALGPRPALPES) is disordered. Residues 572–581 (SADQGDSSEG) show a composition bias toward polar residues. Ser-579 is modified (phosphoserine). Basic and acidic residues predominate over residues 586–607 (RGEEEEKRLTPPEVSHGDRDTQ). The span at 610–622 (RPPGALGPRPALP) shows a compositional bias: low complexity. Residues 662-682 (SLCVVLYVASSLFLMVMYFFF) traverse the membrane as a helical segment.

It belongs to the quiescin-sulfhydryl oxidase (QSOX) family. Requires FAD as cofactor. As to expression, expressed in pancreas, brain, placenta, kidney, heart and fetal tissues. Weakly expressed in lung, liver and skeletal muscles.

Its subcellular location is the membrane. It localises to the secreted. It is found in the cell membrane. The protein localises to the nucleus membrane. It catalyses the reaction 2 R'C(R)SH + O2 = R'C(R)S-S(R)CR' + H2O2. Catalyzes the oxidation of sulfhydryl groups in peptide and protein thiols to disulfides with the reduction of oxygen to hydrogen peroxide. May contribute to disulfide bond formation in a variety of secreted proteins. Also seems to play a role in regulating the sensitization of neuroblastoma cells for interferon-gamma-induced apoptosis. This chain is Sulfhydryl oxidase 2 (QSOX2), found in Homo sapiens (Human).